The following is a 638-amino-acid chain: Probable potassium transport system protein Kup (638 aa).

Transmembrane regions (helical) follow at residues 25 to 45 (LAIA…LYSL), 65 to 85 (VISL…LLFV), 114 to 134 (AGAL…DAVI), 152 to 172 (PHLS…LFWI), 184 to 204 (FGPI…YHIV), 226 to 246 (LLQA…AEAL), 262 to 282 (AYGL…ALLI), 291 to 311 (PFFL…STVA), 352 to 372 (IYVP…VIGF), 382 to 402 (YGIA…VVMV), 410 to 430 (LLVG…FGAN), and 434 to 454 (VAQG…LLMT).

Belongs to the HAK/KUP transporter (TC 2.A.72) family.

The protein localises to the cell inner membrane. The catalysed reaction is K(+)(in) + H(+)(in) = K(+)(out) + H(+)(out). Functionally, transport of potassium into the cell. Likely operates as a K(+):H(+) symporter. The polypeptide is Probable potassium transport system protein Kup (Burkholderia lata (strain ATCC 17760 / DSM 23089 / LMG 22485 / NCIMB 9086 / R18194 / 383)).